The chain runs to 356 residues: Torsin-like protein (356 aa).

The first 18 residues, 1–18, serve as a signal peptide directing secretion; that stretch reads MKLDYVLLLLFHLCFVNT. Residue 110–117 participates in ATP binding; sequence GYTGSGKN. N-linked (GlcNAc...) asparagine glycosylation is found at Asn125 and Asn250.

The protein belongs to the ClpA/ClpB family. Torsin subfamily.

The protein resides in the endoplasmic reticulum lumen. Its function is as follows. May serve as a molecular chaperone assisting in the proper folding of secreted and/or membrane proteins. The polypeptide is Torsin-like protein (ooc-5) (Caenorhabditis elegans).